A 156-amino-acid polypeptide reads, in one-letter code: ATP synthase subunit b (156 aa).

Residues 7 to 29 (LLGQAISFLLFVWFCMKFVWPPL) form a helical membrane-spanning segment.

This sequence belongs to the ATPase B chain family. As to quaternary structure, F-type ATPases have 2 components, F(1) - the catalytic core - and F(0) - the membrane proton channel. F(1) has five subunits: alpha(3), beta(3), gamma(1), delta(1), epsilon(1). F(0) has three main subunits: a(1), b(2) and c(10-14). The alpha and beta chains form an alternating ring which encloses part of the gamma chain. F(1) is attached to F(0) by a central stalk formed by the gamma and epsilon chains, while a peripheral stalk is formed by the delta and b chains.

The protein localises to the cell inner membrane. F(1)F(0) ATP synthase produces ATP from ADP in the presence of a proton or sodium gradient. F-type ATPases consist of two structural domains, F(1) containing the extramembraneous catalytic core and F(0) containing the membrane proton channel, linked together by a central stalk and a peripheral stalk. During catalysis, ATP synthesis in the catalytic domain of F(1) is coupled via a rotary mechanism of the central stalk subunits to proton translocation. Its function is as follows. Component of the F(0) channel, it forms part of the peripheral stalk, linking F(1) to F(0). This is ATP synthase subunit b from Shewanella halifaxensis (strain HAW-EB4).